A 351-amino-acid polypeptide reads, in one-letter code: Protein MGF 360-2L (351 aa).

It belongs to the asfivirus MGF 360 family.

In terms of biological role, plays a role in virus cell tropism, and may be required for efficient virus replication in macrophages. The sequence is that of Protein MGF 360-2L from African swine fever virus (isolate Tick/South Africa/Pretoriuskop Pr4/1996) (ASFV).